Consider the following 709-residue polypeptide: Polyribonucleotide nucleotidyltransferase (709 aa).

2 residues coordinate Mg(2+): D485 and D491. Positions 552–611 (PRIYTMKIDPKKIKDVIGKGGATIRSLTEETGTSIDIDDDGTVKIAAVDSNAAKNVMGRI) constitute a KH domain. Residues 621-689 (GAIYKGKVTR…RQGRIRLTMK (69 aa)) form the S1 motif domain.

The protein belongs to the polyribonucleotide nucleotidyltransferase family. In terms of assembly, component of the RNA degradosome, which is a multiprotein complex involved in RNA processing and mRNA degradation. Requires Mg(2+) as cofactor.

It localises to the cytoplasm. The enzyme catalyses RNA(n+1) + phosphate = RNA(n) + a ribonucleoside 5'-diphosphate. Its function is as follows. Involved in mRNA degradation. Catalyzes the phosphorolysis of single-stranded polyribonucleotides processively in the 3'- to 5'-direction. This Haemophilus influenzae (strain 86-028NP) protein is Polyribonucleotide nucleotidyltransferase.